The primary structure comprises 1713 residues: uncharacterized protein (1713 aa).

A compositionally biased stretch (polar residues) spans 1 to 12; it reads MNENEFSTNSLI. Disordered regions lie at residues 1-35, 79-200, 226-290, 309-557, 713-734, 808-952, and 1143-1190; these read MNEN…INFG, QQLN…KLSN, GNNN…QPLS, QYLS…PMSH, SNDQ…KKDR, SPPM…SITT, and HHHH…SISR. Low complexity-rich tracts occupy residues 13–35, 79–109, 126–170, 177–200, and 226–264; these read NQQG…INFG, QQLN…NNNN, NNSG…NSGN, NMSD…KLSN, and GNNN…GGNN. The segment covering 265–276 has biased composition (basic residues); sequence SHHHHNHSHHNS. Low complexity-rich tracts occupy residues 317–470 and 478–489; these read NNIN…SPAS and SNNFGGNHNNYN. The segment covering 490–504 has biased composition (basic residues); the sequence is HAHHSHHNNHAHHNT. Low complexity predominate over residues 505–553; sequence HNYNNNNNNNNNNNNNNNNNNNNSNNSNNNSNTNNNGNNGNNSNNNNNH. The segment at residues 544–825 is a DNA-binding region (NDT80); that stretch reads GNNSNNNNNH…QNPGRFLNHD (282 aa). Positions 822 to 832 are enriched in basic and acidic residues; sequence LNHDKSLKKDP. Positions 838 to 874 are enriched in gly residues; sequence GGKGGGGSGSGGMGGGMGGGMGNNGSSGSSSNGGYGN. Low complexity-rich tracts occupy residues 898 to 946 and 1148 to 1189; these read SPTT…PTLT and QQQQ…SSIS. The Peptidase S74 domain maps to 1240–1355; the sequence is SDQRIKSNIR…RSLKKEKDHI (116 aa). Transmembrane regions (helical) follow at residues 1416 to 1436, 1447 to 1467, and 1473 to 1493; these read TMFV…FYLF, LMNF…TFYV, and LIIA…VGFF. Residues 1596–1605 show a composition bias toward low complexity; sequence NSNNNINNNN. 2 disordered regions span residues 1596–1634 and 1646–1665; these read NSNN…DFHE and IKGK…SSSN. The span at 1617–1634 shows a compositional bias: basic and acidic residues; it reads FIDDFKKSSSNNHKDFHE.

It is found in the membrane. This is an uncharacterized protein from Dictyostelium discoideum (Social amoeba).